We begin with the raw amino-acid sequence, 511 residues long: Ent-copalyl diphosphate synthase (511 aa).

A divalent metal cation-binding residues include Asp-291 and Asp-293. A DXDD motif motif is present at residues Asp-291 to Asp-294.

It belongs to the terpene synthase family. In terms of assembly, homodimer. The cofactor is a divalent metal cation.

The catalysed reaction is (2E,6E,10E)-geranylgeranyl diphosphate = ent-copalyl diphosphate. The protein operates within antibiotic biosynthesis. Involved in viguiepinol biosynthesis. Catalyzes the conversion of geranylgeranyl diphosphate (GGDP) into copalyl diphosphate (ent-CDP). This is Ent-copalyl diphosphate synthase from Streptomyces sp. (strain KO-3988).